A 54-amino-acid polypeptide reads, in one-letter code: uncharacterized protein (54 aa).

Residues 32 to 52 (LFSLLVLIILCFIDPILFYFI) traverse the membrane as a helical segment.

It is found in the host membrane. This is an uncharacterized protein from Cassava vein mosaic virus (CsVMV).